The following is a 281-amino-acid chain: Protein ZAR1-like 1.S (281 aa).

A 3CxxC-type zinc finger spans residues 183–267 (QKYGFFQCKD…QDLCGRCKGQ (85 aa)).

This sequence belongs to the ZAR1 family. As to quaternary structure, component of a cytoplasmic ribonucleoprotein complex together with eif4enif1/4E-T and cpeb1. In terms of tissue distribution, expressed in oocytes.

It is found in the cytoplasm. It localises to the cytoplasmic ribonucleoprotein granule. Its function is as follows. mRNA-binding protein required for maternal mRNA storage, translation and degradation during oocyte maturation. Controls timing of meiosis during oogenesis. Probably promotes formation of some phase-separated membraneless compartment that stores maternal mRNAs in oocytes: acts by undergoing liquid-liquid phase separation upon binding to maternal mRNAs. Binds to the 3'-UTR of maternal mRNAs, inhibiting their translation. The chain is Protein ZAR1-like 1.S from Xenopus laevis (African clawed frog).